We begin with the raw amino-acid sequence, 352 residues long: Photosystem II D2 protein (352 aa).

The helical transmembrane segment at 40–60 threads the bilayer; sequence TAYLALGGWLTGTTFVTSWYT. His-117 contacts chlorophyll a. A helical membrane pass occupies residues 124–140; the sequence is GFMLRQFEIARLVGIRP. 2 residues coordinate pheophytin a: Gln-129 and Asn-142. A helical membrane pass occupies residues 152-165; it reads VFVSVFLIYPLGQS. A chlorophyll a-binding site is contributed by His-197. A helical transmembrane segment spans residues 207 to 227; that stretch reads GALLCAIHGATVENTLFEDGE. A plastoquinone-binding residues include His-214 and Phe-261. His-214 provides a ligand contact to Fe cation. His-268 is a Fe cation binding site. Residues 278-294 traverse the membrane as a helical segment; sequence GLWTSSIGIIGLALNLR.

The protein belongs to the reaction center PufL/M/PsbA/D family. PSII is composed of 1 copy each of membrane proteins PsbA, PsbB, PsbC, PsbD, PsbE, PsbF, PsbH, PsbI, PsbJ, PsbK, PsbL, PsbM, PsbT, PsbX, PsbY, PsbZ, Psb30/Ycf12, at least 3 peripheral proteins of the oxygen-evolving complex and a large number of cofactors. It forms dimeric complexes. The D1/D2 heterodimer binds P680, chlorophylls that are the primary electron donor of PSII, and subsequent electron acceptors. It shares a non-heme iron and each subunit binds pheophytin, quinone, additional chlorophylls, carotenoids and lipids. There is also a Cl(-1) ion associated with D1 and D2, which is required for oxygen evolution. The PSII complex binds additional chlorophylls, carotenoids and specific lipids. is required as a cofactor.

The protein resides in the plastid. The protein localises to the organellar chromatophore thylakoid membrane. It carries out the reaction 2 a plastoquinone + 4 hnu + 2 H2O = 2 a plastoquinol + O2. Functionally, photosystem II (PSII) is a light-driven water:plastoquinone oxidoreductase that uses light energy to abstract electrons from H(2)O, generating O(2) and a proton gradient subsequently used for ATP formation. It consists of a core antenna complex that captures photons, and an electron transfer chain that converts photonic excitation into a charge separation. The D1/D2 (PsbA/PsbD) reaction center heterodimer binds P680, the primary electron donor of PSII as well as several subsequent electron acceptors. D2 is needed for assembly of a stable PSII complex. The sequence is that of Photosystem II D2 protein from Paulinella chromatophora.